The following is a 229-amino-acid chain: RNA pyrophosphohydrolase (229 aa).

One can recognise a Nudix hydrolase domain in the interval 6-149 (GFRPNVGIIL…KRGVYEMALT (144 aa)). Residues 38–59 (GGIDRGETPEQAMFRELHEEVG) carry the Nudix box motif. The disordered stretch occupies residues 191–229 (KPGMELPPGASFDPDPQNSVPAPLEALPTLPVPKKPLDA). Residues 220–229 (LPVPKKPLDA) are compositionally biased toward pro residues.

This sequence belongs to the Nudix hydrolase family. RppH subfamily. It depends on a divalent metal cation as a cofactor.

In terms of biological role, accelerates the degradation of transcripts by removing pyrophosphate from the 5'-end of triphosphorylated RNA, leading to a more labile monophosphorylated state that can stimulate subsequent ribonuclease cleavage. This chain is RNA pyrophosphohydrolase, found in Acidovorax ebreus (strain TPSY) (Diaphorobacter sp. (strain TPSY)).